Reading from the N-terminus, the 403-residue chain is Deubiquitinase and deneddylase Dub1 (403 aa).

The segment covering 1–11 (MLSPTNSTSKT) has biased composition (polar residues). The segment at 1–24 (MLSPTNSTSKTAPVPPRDSSKPVL) is disordered. The helical transmembrane segment at 40–60 (TALAVLLVVVTLGLILLFYSF) threads the bilayer. A disordered region spans residues 77-132 (KEQPTISIPVPLPSPPLAVPRPSTPPAPTPAISRPSTPSAPKPSTPPPLLPKAPKP). 2 stretches are compositionally biased toward pro residues: residues 86–105 (VPLPSPPLAVPRPSTPPAPT) and 114–130 (PSAPKPSTPPPLLPKAP). Active-site residues include H277, D294, and C347.

The protein belongs to the peptidase C48 family.

The protein resides in the secreted. Its subcellular location is the host cell. It localises to the membrane. Functionally, effector proteins function to alter host cell physiology and promote bacterial survival in host tissues. This protease possesses deubiquitinating and deneddylating activities. The polypeptide is Deubiquitinase and deneddylase Dub1 (cdu1) (Chlamydia trachomatis serovar L2b (strain UCH-1/proctitis)).